The chain runs to 284 residues: Undecaprenyl-diphosphatase (284 aa).

8 helical membrane-spanning segments follow: residues 1–21, 43–63, 88–108, 116–136, 149–169, 193–213, 225–245, and 259–279; these read MNWL…FLPV, ITAF…LYFW, YTLG…GLVF, LSSL…MWLG, IGIV…LFPG, LSFF…SVSA, VAIG…VAYV, and FTGF…LILS.

This sequence belongs to the UppP family.

The protein localises to the cell membrane. It catalyses the reaction di-trans,octa-cis-undecaprenyl diphosphate + H2O = di-trans,octa-cis-undecaprenyl phosphate + phosphate + H(+). Functionally, catalyzes the dephosphorylation of undecaprenyl diphosphate (UPP). Confers resistance to bacitracin. In Cutibacterium acnes (strain DSM 16379 / KPA171202) (Propionibacterium acnes), this protein is Undecaprenyl-diphosphatase.